The following is a 787-amino-acid chain: Lysine-specific demethylase JMJ13 (787 aa).

A JmjN domain is found at 103–144; it reads CPVYRPTKEEFEDPLTYLQKIFPEASKYGICKIVSPLTATVP. Residues 250–420 enclose the JmjC domain; that stretch reads SSKWNLNKVS…FGAIASCRYA (171 aa). Histidine 293, glutamate 295, and histidine 388 together coordinate Fe cation. Residues cysteine 500, cysteine 503, cysteine 514, cysteine 516, histidine 519, cysteine 522, histidine 525, and cysteine 534 each coordinate Zn(2+). A C4HCHC zinc finger spans residues 500-551; that stretch reads CSLCKRDCYLAFINCECYSHPVCLRHDVKKLDLPCGTTHTLYLRDNIEDMEA. The C5HC2 zinc-finger motif lies at 500–551; that stretch reads CSLCKRDCYLAFINCECYSHPVCLRHDVKKLDLPCGTTHTLYLRDNIEDMEA. The 59-residue stretch at 617-675 folds into the FYR N-terminal domain; it reads VMSYEANASCISSVADDYECSDYVNRRANCSSSSDSKLSEEVACSSSKKTRFFPVVQDE. The 80-residue stretch at 677–756 folds into the FYR C-terminal domain; that stretch reads LVADQESDGS…ELVISNRKET (80 aa). Residues 712 to 769 form a disordered region; sequence ESDHHQELKRLKKSHHHEGRYSSSSSVSRQEEEEDELVISNRKETQQQSDVKMQKKRI. The Nuclear localization signal signature appears at 752–759; it reads NRKETQQQ.

Belongs to the JARID1 histone demethylase family. Fe(2+) serves as cofactor. As to expression, mostly expressed in leaves, and, to a lower extent, in inflorescences, roots, siliques and stems.

It localises to the nucleus. It catalyses the reaction N(6),N(6),N(6)-trimethyl-L-lysyl(27)-[histone H3] + 2-oxoglutarate + O2 = N(6),N(6)-dimethyl-L-lysyl(27)-[histone H3] + formaldehyde + succinate + CO2. In terms of biological role, histone demethylase that demethylates 'Lys-27' (H3K27me) of histone H3 with a specific activity for H3K27me3 and involved in the regulation of gene expression. Acts as a temperature and photoperiod dependent flowering repressor. The polypeptide is Lysine-specific demethylase JMJ13 (Arabidopsis thaliana (Mouse-ear cress)).